Here is a 326-residue protein sequence, read N- to C-terminus: Pyruvate dehydrogenase E1 component subunit alpha (326 aa).

As to quaternary structure, heterodimer of an alpha and a beta chain. Requires thiamine diphosphate as cofactor.

It carries out the reaction N(6)-[(R)-lipoyl]-L-lysyl-[protein] + pyruvate + H(+) = N(6)-[(R)-S(8)-acetyldihydrolipoyl]-L-lysyl-[protein] + CO2. Functionally, the pyruvate dehydrogenase complex catalyzes the overall conversion of pyruvate to acetyl-CoA and CO(2). It contains multiple copies of three enzymatic components: pyruvate dehydrogenase (E1), dihydrolipoamide acetyltransferase (E2) and lipoamide dehydrogenase (E3). This Rickettsia typhi (strain ATCC VR-144 / Wilmington) protein is Pyruvate dehydrogenase E1 component subunit alpha (pdhA).